Here is a 612-residue protein sequence, read N- to C-terminus: T-cell immunomodulatory protein (612 aa).

A signal peptide spans 1-33 (MAAAGRLPSSWALFSPLLAGLALLGVGPVPARA). 9 N-linked (GlcNAc...) asparagine glycosylation sites follow: asparagine 36, asparagine 95, asparagine 139, asparagine 146, asparagine 151, asparagine 176, asparagine 188, asparagine 226, and asparagine 243. An FG-GAP; atypical repeat occupies 258–293 (VVGQSAFADFDGDGHMDHLLPGCEDKNCQKSTIYLV). N-linked (GlcNAc...) asparagine glycans are attached at residues asparagine 353, asparagine 371, and asparagine 482. Residues 567–587 (VLLTAIALIGVCVFILAIIGI) form a helical membrane-spanning segment.

It belongs to the TIP family. As to quaternary structure, interacts with RUVBL1, RUVBL2 and alpha-tubulin. Ubiquitously expressed.

It is found in the secreted. The protein resides in the membrane. In terms of biological role, modulator of T-cell function. Has a protective effect in graft versus host disease model. The chain is T-cell immunomodulatory protein from Homo sapiens (Human).